We begin with the raw amino-acid sequence, 195 residues long: Inner membrane-spanning protein YciB (195 aa).

5 helical membrane-spanning segments follow: residues 34-54 (IYGATATLILASVIVYGALWL), 65-85 (FTLGACLVLGGLTLAFHEDTF), 88-108 (WKAPLVNWLFALAFAGSHFIG), 131-151 (LNIAWVVFFLVCGFANLYVVF), and 160-180 (FKVFGSLGMTLLFLIGQGIFL).

This sequence belongs to the YciB family.

It is found in the cell inner membrane. Its function is as follows. Plays a role in cell envelope biogenesis, maintenance of cell envelope integrity and membrane homeostasis. This is Inner membrane-spanning protein YciB from Pseudomonas paraeruginosa (strain DSM 24068 / PA7) (Pseudomonas aeruginosa (strain PA7)).